The chain runs to 296 residues: Endochitinase 3 (296 aa).

One can recognise a GH18 domain in the interval 12–296 (HKLTVYWGAE…VKNGQLPEED (285 aa)). Residues Asn32 and Asn152 are each glycosylated (N-linked (GlcNAc...) asparagine). Glu153 serves as the catalytic Proton donor. Asn228 carries an N-linked (GlcNAc...) asparagine glycan.

The protein belongs to the glycosyl hydrolase 18 family. Chitinase class III subfamily.

It localises to the secreted. It carries out the reaction Random endo-hydrolysis of N-acetyl-beta-D-glucosaminide (1-&gt;4)-beta-linkages in chitin and chitodextrins.. Secreted chitinase involved in the degradation of chitin, a component of the cell walls of fungi and exoskeletal elements of some animals (including worms and arthropods). Participates in the infection process and directly acts in the penetration process of the host cuticle. Involved in heat-shock adaptation. This is Endochitinase 3 (chi3) from Metarhizium anisopliae (Entomophthora anisopliae).